The primary structure comprises 389 residues: MPLPTSQLRLAMVAGEPSGDLLGASLLGGLRERLPESAQYYGIGGQRMIAQGFDSHWQMDKLTVRGYVEALGQIPEILRIRGELKRQLLAERPDAFIGVDAPDFNFNVEQAARDAGIPSIHFVCPSIWAWRGGRIKKIAKSVDHMLCLFPFEPAILDKAGVASTYVGHPLADEIPLEPDTHGARIALGLPADGPVIAVLPGSRRSEIALIGPTFFAAMALMQQREPGVRFVMPAATPALRALLQPLVDAHPKLALTITDGRSQVAMTAADAILVKSGTVTLEAALLKKPMVISYKVPWLTGQIMRRQGYLPYVGLPNILAGRFVVPELLQHFATPEALADATLTQLRDDANRRTLTEIFTEMHLSLRQNTAAKAAEAVVRVLEQRKGRA.

Belongs to the LpxB family.

It carries out the reaction a lipid X + a UDP-2-N,3-O-bis[(3R)-3-hydroxyacyl]-alpha-D-glucosamine = a lipid A disaccharide + UDP + H(+). Its pathway is bacterial outer membrane biogenesis; LPS lipid A biosynthesis. Functionally, condensation of UDP-2,3-diacylglucosamine and 2,3-diacylglucosamine-1-phosphate to form lipid A disaccharide, a precursor of lipid A, a phosphorylated glycolipid that anchors the lipopolysaccharide to the outer membrane of the cell. This is Lipid-A-disaccharide synthase from Burkholderia lata (strain ATCC 17760 / DSM 23089 / LMG 22485 / NCIMB 9086 / R18194 / 383).